Reading from the N-terminus, the 398-residue chain is MARNIKVEELLQTPIEKQQIELVERKGIGHPDSISDGLAEAVSRALCREYITKCGAVLHHNTDETQIVAGRSSPKFGGGEVLQPIYMLLVGRATKEFEGAELATESVALKAARNYLRNTMVNMDLERDVIIDCKLGTGSSDLRDVFKRDRVPMANDTSFGVGHAPFSELENIVYNTERQLLTDLKSRMPAIGEDMKIMGLRDGDDISLTICSGMIGRYVDDLDSYINMTQEMKTYTEELAARYTERNVNVFVNTADNLKASCVFLTVTGTSAEMGDDGSVGRGNRCNGLITPNRPMSMEATSGKNPINHIGKIYNLLSTQMARDIVKQVPDVQDVYIRLLSQIGKPIDQPLVASAQIIPKEGTSFANVKSEAEVVIDDWLSNVTKITEMVIRGELNTF.

136–141 (GTGSSD) contributes to the ATP binding site.

The protein belongs to the AdoMet synthase 2 family. The cofactor is Mg(2+).

The catalysed reaction is L-methionine + ATP + H2O = S-adenosyl-L-methionine + phosphate + diphosphate. It participates in amino-acid biosynthesis; S-adenosyl-L-methionine biosynthesis; S-adenosyl-L-methionine from L-methionine: step 1/1. Its function is as follows. Catalyzes the formation of S-adenosylmethionine from methionine and ATP. This chain is S-adenosylmethionine synthase, found in Methanosarcina mazei (strain ATCC BAA-159 / DSM 3647 / Goe1 / Go1 / JCM 11833 / OCM 88) (Methanosarcina frisia).